The following is a 309-amino-acid chain: Coenzyme PQQ synthesis protein B (309 aa).

Belongs to the PqqB family.

It participates in cofactor biosynthesis; pyrroloquinoline quinone biosynthesis. Its function is as follows. May be involved in the transport of PQQ or its precursor to the periplasm. This is Coenzyme PQQ synthesis protein B from Bradyrhizobium diazoefficiens (strain JCM 10833 / BCRC 13528 / IAM 13628 / NBRC 14792 / USDA 110).